The sequence spans 224 residues: LexA repressor (224 aa).

Positions 31–51 (RAEIAAEFGFKSANAAEEHLQ) form a DNA-binding region, H-T-H motif. Residues Ser-142 and Lys-179 each act as for autocatalytic cleavage activity in the active site.

This sequence belongs to the peptidase S24 family. As to quaternary structure, homodimer.

The catalysed reaction is Hydrolysis of Ala-|-Gly bond in repressor LexA.. Represses a number of genes involved in the response to DNA damage (SOS response), including recA and lexA. In the presence of single-stranded DNA, RecA interacts with LexA causing an autocatalytic cleavage which disrupts the DNA-binding part of LexA, leading to derepression of the SOS regulon and eventually DNA repair. The chain is LexA repressor from Paracidovorax citrulli (strain AAC00-1) (Acidovorax citrulli).